We begin with the raw amino-acid sequence, 1081 residues long: Teashirt homolog 3 (1081 aa).

Disordered regions lie at residues 141–161 (PSSEKNNGSSSSSSSSSSSCG) and 238–257 (HYRDDNHETDNNNPKRWSKP). The span at 148–161 (GSSSSSSSSSSSCG) shows a compositional bias: low complexity. 2 consecutive C2H2-type zinc fingers follow at residues 214-238 (FRCKDCSAAYDTLVELTVHMNETGH) and 275-299 (LKCMYCGHSFESLQDLSVHMIKTKH). Residues 238–247 (HYRDDNHETD) show a composition bias toward basic and acidic residues. The segment at 325–364 (SLELELPSSPDSTGGTPKATISDTNDALQKNSNPYITPNN) is disordered. Residues 335-364 (DSTGGTPKATISDTNDALQKNSNPYITPNN) show a composition bias toward polar residues. Residues 386 to 404 (LKCMECGSSHDTLQELTAH) form a C2H2-type 3; atypical zinc finger. The span at 473–491 (EVDKEKAVTDEKPKQKDKP) shows a compositional bias: basic and acidic residues. Disordered stretches follow at residues 473-502 (EVDKEKAVTDEKPKQKDKPGEEEEKCDISS), 579-604 (NSEIVSPTKNQTLVSPPSSQTSPMPK), 626-687 (EKMK…LAEP), and 855-897 (TESH…RQSN). Positions 581 to 603 (EIVSPTKNQTLVSPPSSQTSPMP) are enriched in polar residues. A coiled-coil region spans residues 606–630 (NFHAMEELVKKVTEKVAKVEEKMKE). At Ser-682 the chain carries Phosphoserine. Positions 856–869 (ESHTSKSSTPSSIS) are enriched in low complexity. Positions 891–961 (RKGRQSNWNP…NVKYQLRRTG (71 aa)) form a DNA-binding region, homeobox; atypical. 2 consecutive C2H2-type zinc fingers follow at residues 976–998 (FFCNDCASQIRTPSTYISHLESH) and 1041–1064 (YQCKLCNRTFASKHAVKLHLSKTH).

This sequence belongs to the teashirt C2H2-type zinc-finger protein family. In terms of assembly, interacts (via homeobox domain) with APBB1 (via PID domain 1). Interacts (via N-terminus) with HDAC1 and HDAC2; the interaction is direct. Found in a trimeric complex with APBB1 and HDAC1; the interaction between HDAC1 and APBB1 is mediated by TSHZ3. Expressed in brain; strongly reduced in post-mortem elderly subjects with Alzheimer disease. Expressed in the fetal neocortex.

It is found in the nucleus. It localises to the cell projection. The protein resides in the growth cone. Transcriptional regulator involved in developmental processes. Functions in association with APBB1, SET and HDAC factors as a transcriptional repressor, that inhibits the expression of CASP4. TSHZ3-mediated transcription repression involves the recruitment of histone deacetylases HDAC1 and HDAC2. Associates with chromatin in a region surrounding the CASP4 transcriptional start site(s). Regulates the development of neurons involved in both respiratory rhythm and airflow control. Promotes maintenance of nucleus ambiguus (nA) motoneurons, which govern upper airway function, and establishes a respiratory rhythm generator (RRG) activity compatible with survival at birth. Involved in the differentiation of the proximal uretic smooth muscle cells during developmental processes. Involved in the up-regulation of myocardin, that directs the expression of smooth muscle cells in the proximal ureter. Involved in the modulation of glutamatergic synaptic transmission and long-term synaptic potentiation. This chain is Teashirt homolog 3 (TSHZ3), found in Homo sapiens (Human).